We begin with the raw amino-acid sequence, 282 residues long: RNA-4 uncharacterized 31.9 kDa protein (282 aa).

The polypeptide is RNA-4 uncharacterized 31.9 kDa protein (Beta macrocarpa (Beet)).